We begin with the raw amino-acid sequence, 553 residues long: Solute carrier family 22 member 12 (553 aa).

The helical transmembrane segment at 16 to 36 (FQLLQAVALVTPILWVTTQNM) threads the bilayer. 3 N-linked (GlcNAc...) asparagine glycosylation sites follow: Asn-56, Asn-102, and Asn-107. 11 helical membrane-spanning segments follow: residues 146 to 166 (PMAQ…CGHA), 182 to 202 (LVSV…YCLF), 204 to 224 (FLVA…LMEW), 232 to 252 (LMMT…GSVA), 260 to 280 (MLQL…WWLP), 351 to 371 (FISM…ALDL), 378 to 398 (IFLL…GSLL), 407 to 427 (LCQA…ILVP), 435 to 455 (SSLA…VTIF), 466 to 486 (MTAV…GPLV), and 495 to 515 (WLPL…ALLL). A Phosphoserine modification is found at Ser-534.

Belongs to the major facilitator (TC 2.A.1) superfamily. Organic cation transporter (TC 2.A.1.19) family. In terms of assembly, interacts with PDZK1. Post-translationally, N-glycosylated. In terms of tissue distribution, expressed in the proximal tubular epithelial cells in kidney.

Its subcellular location is the apical cell membrane. It catalyses the reaction urate(out) + (S)-lactate(in) = urate(in) + (S)-lactate(out). The enzyme catalyses nicotinate(in) + urate(out) = nicotinate(out) + urate(in). The catalysed reaction is urate(out) + n chloride(in) = urate(in) + n chloride(out). It carries out the reaction orotate(out) + nicotinate(in) = orotate(in) + nicotinate(out). Functionally, electroneutral antiporter that translocates urate across the apical membrane of proximal tubular cells in exchange for monovalent organic or inorganic anions. Involved in renal reabsorption of urate and helps maintaining blood levels of uric acid. Mediates urate uptake by an exchange with organic anions such as (S)-lactate and nicotinate, and inorganic anion Cl(-). Other inorganic anions such as Br(-), I(-) and NO3(-) may also act as counteranions that exchange for urate. Also mediates orotate tubular uptake coupled with nicotinate efflux and to a lesser extent with lactate efflux, therefore displaying a potential role in orotate renal reabsorption. Orotate transport is Cl(-)-dependent. This is Solute carrier family 22 member 12 (Slc22a12) from Rattus norvegicus (Rat).